We begin with the raw amino-acid sequence, 488 residues long: Zinc finger protein 345 (488 aa).

C2H2-type zinc fingers lie at residues 62 to 84 (LECK…QRIH), 90 to 112 (YECK…QRIH), 118 to 140 (FECK…QRIH), 146 to 168 (YECK…QIIH), 174 to 196 (YECK…HRIH), 202 to 224 (YECI…RRIH), 230 to 252 (YECK…QRIH), 258 to 280 (YICN…QRIH), 286 to 308 (YVCK…QRIH), 314 to 336 (YECK…QRMH), 342 to 364 (YECK…HRIH), 370 to 392 (YECK…QLIH), 398 to 420 (YECK…QRIH), 426 to 448 (YECK…QRIH), and 454 to 476 (YECK…KKSH).

The protein belongs to the krueppel C2H2-type zinc-finger protein family.

Its subcellular location is the nucleus. Its function is as follows. May be involved in transcriptional regulation. This chain is Zinc finger protein 345 (ZNF345), found in Homo sapiens (Human).